We begin with the raw amino-acid sequence, 333 residues long: Cytochrome f (333 aa).

The first 16 residues, 1–16 (MRNVFRTARLTRSARA), serve as a signal peptide directing secretion. The helical transmembrane segment at 17–36 (IVKTLLIAIATVTFYFTSDL) threads the bilayer. Heme-binding residues include Y45, C66, C69, and H70. A helical membrane pass occupies residues 299-319 (VKWMIAFVALVMLAQVMLVLK).

The protein belongs to the cytochrome f family. In terms of assembly, the 4 large subunits of the cytochrome b6-f complex are cytochrome b6, subunit IV (17 kDa polypeptide, PetD), cytochrome f and the Rieske protein, while the 4 small subunits are PetG, PetL, PetM and PetN. The complex functions as a dimer. Heme is required as a cofactor.

It localises to the cellular thylakoid membrane. Its function is as follows. Component of the cytochrome b6-f complex, which mediates electron transfer between photosystem II (PSII) and photosystem I (PSI), cyclic electron flow around PSI, and state transitions. The chain is Cytochrome f from Nostoc punctiforme (strain ATCC 29133 / PCC 73102).